Reading from the N-terminus, the 356-residue chain is Core protein VP7 (356 aa).

Asparagine 41 carries an N-linked (GlcNAc...) asparagine; by host glycan.

The protein belongs to the orbivirus VP7 family.

It localises to the virion. Functionally, the VP7 protein is one of the five proteins (with VP1, VP3, VP4, and VP6) which form the inner capsid of the virus. This is Core protein VP7 (Segment-7) from Broadhaven virus (BRD).